A 134-amino-acid polypeptide reads, in one-letter code: Large ribosomal subunit protein uL22 (134 aa).

It belongs to the universal ribosomal protein uL22 family. As to quaternary structure, part of the 50S ribosomal subunit.

Functionally, this protein binds specifically to 23S rRNA; its binding is stimulated by other ribosomal proteins, e.g. L4, L17, and L20. It is important during the early stages of 50S assembly. It makes multiple contacts with different domains of the 23S rRNA in the assembled 50S subunit and ribosome. The globular domain of the protein is located near the polypeptide exit tunnel on the outside of the subunit, while an extended beta-hairpin is found that lines the wall of the exit tunnel in the center of the 70S ribosome. The polypeptide is Large ribosomal subunit protein uL22 (Porphyromonas gingivalis (strain ATCC 33277 / DSM 20709 / CIP 103683 / JCM 12257 / NCTC 11834 / 2561)).